Here is a 479-residue protein sequence, read N- to C-terminus: Anaerobic nitric oxide reductase flavorubredoxin (479 aa).

Residues 30 to 210 (LRGSSYNSYL…PFSRLVTPKI (181 aa)) are zinc metallo-hydrolase. 6 residues coordinate Fe cation: histidine 79, glutamate 81, aspartate 83, histidine 147, aspartate 166, and histidine 227. Residues 254-393 (ITIFYDTMSN…LCREHGREIA (140 aa)) form the Flavodoxin-like domain. Residues 260–264 (TMSNN) and 342–369 (AFGS…EMSL) each bind FMN. In terms of domain architecture, Rubredoxin-like spans 423-479 (GPRMQCSVCQWIYDPAKGEPMQDVAPGTPWSEVPDNFLCPECSLGKDVFEELASEAK). Residues cysteine 428, cysteine 431, cysteine 461, and cysteine 464 each coordinate Fe cation.

It in the N-terminal section; belongs to the zinc metallo-hydrolase group 3 family. In terms of assembly, homotetramer. Fe cation is required as a cofactor. The cofactor is FMN.

Its subcellular location is the cytoplasm. It participates in nitrogen metabolism; nitric oxide reduction. Functionally, anaerobic nitric oxide reductase; uses NADH to detoxify nitric oxide (NO), protecting several 4Fe-4S NO-sensitive enzymes. Has at least 2 reductase partners, only one of which (NorW, flavorubredoxin reductase) has been identified. NO probably binds to the di-iron center; electrons enter from the reductase at rubredoxin and are transferred sequentially to the FMN center and the di-iron center. Also able to function as an aerobic oxygen reductase. The sequence is that of Anaerobic nitric oxide reductase flavorubredoxin (norV) from Escherichia coli (strain K12 / DH10B).